Reading from the N-terminus, the 207-residue chain is Large ribosomal subunit protein uL4 (207 aa).

Positions 45–78 are disordered; sequence RQGTHAVKNRSAVSGGGRKPWRQKGTGRARQGSI.

This sequence belongs to the universal ribosomal protein uL4 family. As to quaternary structure, part of the 50S ribosomal subunit.

Functionally, one of the primary rRNA binding proteins, this protein initially binds near the 5'-end of the 23S rRNA. It is important during the early stages of 50S assembly. It makes multiple contacts with different domains of the 23S rRNA in the assembled 50S subunit and ribosome. In terms of biological role, forms part of the polypeptide exit tunnel. The chain is Large ribosomal subunit protein uL4 from Lacticaseibacillus paracasei (strain ATCC 334 / BCRC 17002 / CCUG 31169 / CIP 107868 / KCTC 3260 / NRRL B-441) (Lactobacillus paracasei).